The following is a 660-amino-acid chain: Glycine betaine transporter (660 aa).

Residues 1–13 (MPSKTSSRFANIN) lie on the Cytoplasmic side of the membrane. Residues 14–34 (PNVFVSTIMIIAIFLAIVILA) form a helical membrane-spanning segment. The Periplasmic portion of the chain corresponds to 35 to 52 (PDAFELLTQQLKNWITES). A helical membrane pass occupies residues 53 to 73 (FSWFYVLSVAFFLIVLGYIAC). The Cytoplasmic segment spans residues 74–93 (SSSGKIKLGPDHSQPDYSNS). The helical transmembrane segment at 94–114 (SWFAMLFTAGMGIGLMFFGIA) threads the bilayer. At 115 to 139 (EPIMHYVSPPSGEPETILAAQQSMR) the chain is on the periplasmic side. Residues 140–160 (VTFFHWGLHAWGIYAIVALSL) traverse the membrane as a helical segment. Residues 161 to 195 (SYFAYRHDLPLKIRSSLYPLIGKKIYGPMGDAVDT) lie on the Cytoplasmic side of the membrane. A helical membrane pass occupies residues 196–216 (FATIGTIFGVATTLGFGVTQI). Over 217 to 230 (SSGLNYLFGFEPTS) the chain is Periplasmic. A helical transmembrane segment spans residues 231 to 251 (FSKVVLIIIVSAMAALSVGLG). Over 252 to 263 (LDKGVKRLAELN) the chain is Cytoplasmic. Residues 264–284 (LVLAVTLLAFVFFTSATVYLL) traverse the membrane as a helical segment. Topologically, residues 285–316 (QTTIQNTGQYISNLFEMTFNLYAYQPNGWIGG) are periplasmic. A helical membrane pass occupies residues 317–337 (WTIMYWAWWISWSPFVGMFIA). At 338-347 (RVSRGRTIRE) the chain is on the cytoplasmic side. Residues 348–368 (FIIGVMLIPTGFTLIWMGFMG) traverse the membrane as a helical segment. The Periplasmic portion of the chain corresponds to 369–401 (NAGLYSILHDGNLSLLNAVQRDSSVALFEFLHS). The chain crosses the membrane as a helical span at residues 402-422 (LPFSGVMSLLATVLVVLFFVT). Residues 423 to 446 (SADSGALVVDYLTAKSEDSPVWQR) lie on the Cytoplasmic side of the membrane. The chain crosses the membrane as a helical span at residues 447–467 (LFWIVVMAGLAIILLLAGGLT). Residues 468-471 (ALQS) are Periplasmic-facing. A helical transmembrane segment spans residues 472-492 (ATIMSALPFTFIMLLICWGLI). Over 493–660 (KALRIDSTKM…LSVMRAQTGN (168 aa)) the chain is Cytoplasmic.

This sequence belongs to the BCCT transporter (TC 2.A.15) family.

The protein resides in the cell inner membrane. With respect to regulation, uptake is activated by NaCl, KCl or mannose gradients across the cell membrane. Inhibited by the protonophore 3,3',4',5-tetrachlorosalicylanilide (TCS). In terms of biological role, energy-dependent uptake of glycine betaine in response to high salinity. The polypeptide is Glycine betaine transporter (Acinetobacter baylyi (strain ATCC 33305 / BD413 / ADP1)).